A 94-amino-acid chain; its full sequence is Phosphoribosyl-ATP pyrophosphatase (94 aa).

The protein belongs to the PRA-PH family.

Its subcellular location is the cytoplasm. The catalysed reaction is 1-(5-phospho-beta-D-ribosyl)-ATP + H2O = 1-(5-phospho-beta-D-ribosyl)-5'-AMP + diphosphate + H(+). It functions in the pathway amino-acid biosynthesis; L-histidine biosynthesis; L-histidine from 5-phospho-alpha-D-ribose 1-diphosphate: step 2/9. This is Phosphoribosyl-ATP pyrophosphatase from Saccharolobus islandicus (strain M.16.27) (Sulfolobus islandicus).